The sequence spans 148 residues: 3-hydroxyacyl-[acyl-carrier-protein] dehydratase FabZ (148 aa).

Histidine 48 is an active-site residue.

The protein belongs to the thioester dehydratase family. FabZ subfamily.

It is found in the cytoplasm. It carries out the reaction a (3R)-hydroxyacyl-[ACP] = a (2E)-enoyl-[ACP] + H2O. Its function is as follows. Involved in unsaturated fatty acids biosynthesis. Catalyzes the dehydration of short chain beta-hydroxyacyl-ACPs and long chain saturated and unsaturated beta-hydroxyacyl-ACPs. The protein is 3-hydroxyacyl-[acyl-carrier-protein] dehydratase FabZ of Acinetobacter baylyi (strain ATCC 33305 / BD413 / ADP1).